Consider the following 209-residue polypeptide: MFSYLKGEAIAIHRNLQGRFFLILEVRDIGYEIQVPGRLAQELAAAIGQPQHIFVHSQQREDGTYLYGFASAAARDLFRQLISVSGIGAQGAIALLDTLTLPELVQAIVTADHRQLAKAPGIGKKTAERLALELRSKLSQWRDQFSLPDTAAQPNAAVHEDLELTLLALGYQETEIRGAIATLSQDSILLQNDNADEWIRRAITLLSQT.

Residues 1–70 (MFSYLKGEAI…EDGTYLYGFA (70 aa)) form a domain I region. A domain II region spans residues 71–149 (SAAARDLFRQ…QWRDQFSLPD (79 aa)). The flexible linker stretch occupies residues 149-153 (DTAAQ). The domain III stretch occupies residues 154–209 (PNAAVHEDLELTLLALGYQETEIRGAIATLSQDSILLQNDNADEWIRRAITLLSQT).

Belongs to the RuvA family. Homotetramer. Forms an RuvA(8)-RuvB(12)-Holliday junction (HJ) complex. HJ DNA is sandwiched between 2 RuvA tetramers; dsDNA enters through RuvA and exits via RuvB. An RuvB hexamer assembles on each DNA strand where it exits the tetramer. Each RuvB hexamer is contacted by two RuvA subunits (via domain III) on 2 adjacent RuvB subunits; this complex drives branch migration. In the full resolvosome a probable DNA-RuvA(4)-RuvB(12)-RuvC(2) complex forms which resolves the HJ.

It localises to the cytoplasm. In terms of biological role, the RuvA-RuvB-RuvC complex processes Holliday junction (HJ) DNA during genetic recombination and DNA repair, while the RuvA-RuvB complex plays an important role in the rescue of blocked DNA replication forks via replication fork reversal (RFR). RuvA specifically binds to HJ cruciform DNA, conferring on it an open structure. The RuvB hexamer acts as an ATP-dependent pump, pulling dsDNA into and through the RuvAB complex. HJ branch migration allows RuvC to scan DNA until it finds its consensus sequence, where it cleaves and resolves the cruciform DNA. This chain is Holliday junction branch migration complex subunit RuvA, found in Picosynechococcus sp. (strain ATCC 27264 / PCC 7002 / PR-6) (Agmenellum quadruplicatum).